We begin with the raw amino-acid sequence, 251 residues long: Imidazole glycerol phosphate synthase subunit HisF (251 aa).

Residues aspartate 12 and aspartate 131 contribute to the active site.

It belongs to the HisA/HisF family. Heterodimer of HisH and HisF.

The protein localises to the cytoplasm. The enzyme catalyses 5-[(5-phospho-1-deoxy-D-ribulos-1-ylimino)methylamino]-1-(5-phospho-beta-D-ribosyl)imidazole-4-carboxamide + L-glutamine = D-erythro-1-(imidazol-4-yl)glycerol 3-phosphate + 5-amino-1-(5-phospho-beta-D-ribosyl)imidazole-4-carboxamide + L-glutamate + H(+). It functions in the pathway amino-acid biosynthesis; L-histidine biosynthesis; L-histidine from 5-phospho-alpha-D-ribose 1-diphosphate: step 5/9. Its function is as follows. IGPS catalyzes the conversion of PRFAR and glutamine to IGP, AICAR and glutamate. The HisF subunit catalyzes the cyclization activity that produces IGP and AICAR from PRFAR using the ammonia provided by the HisH subunit. The polypeptide is Imidazole glycerol phosphate synthase subunit HisF (Streptomyces griseus subsp. griseus (strain JCM 4626 / CBS 651.72 / NBRC 13350 / KCC S-0626 / ISP 5235)).